Consider the following 281-residue polypeptide: Large ribosomal subunit protein uL2 (281 aa).

A disordered region spans residues 222–281 (TVRGSAMNPNDHPHGGGEGRQPIGRKSPMTPWGKRALGVKTRATKKASNQFIIRRRKETK).

This sequence belongs to the universal ribosomal protein uL2 family. As to quaternary structure, part of the 50S ribosomal subunit. Forms a bridge to the 30S subunit in the 70S ribosome.

In terms of biological role, one of the primary rRNA binding proteins. Required for association of the 30S and 50S subunits to form the 70S ribosome, for tRNA binding and peptide bond formation. It has been suggested to have peptidyltransferase activity; this is somewhat controversial. Makes several contacts with the 16S rRNA in the 70S ribosome. In Metamycoplasma hominis (strain ATCC 23114 / DSM 25592 / NBRC 14850 / NCTC 10111 / PG21) (Mycoplasma hominis), this protein is Large ribosomal subunit protein uL2.